Consider the following 406-residue polypeptide: Phosphorylase b kinase gamma catalytic chain, liver/testis isoform (406 aa).

Residues 24-291 (YDPKDVIGRG…AEQALQHPFF (268 aa)) form the Protein kinase domain. ATP-binding positions include 30–38 (IGRGVSSVV) and lysine 53. The active-site Proton acceptor is aspartate 153. The tract at residues 306-330 (QRFRVAVWTVLAAGRVALSAHRIRP) is calmodulin-binding (domain-N). The interval 346–370 (VRRLIDNCAFRLYGHWVKKGEQQNR) is calmodulin-binding (domain-C).

Belongs to the protein kinase superfamily. CAMK Ser/Thr protein kinase family. As to quaternary structure, hexadecamer of 4 heterotetramers, each composed of alpha, beta, gamma, and delta subunits. Alpha (PHKA1 or PHKA2) and beta (PHKB) are regulatory subunits, gamma (PHKG1 or PHKG2) is the catalytic subunit, and delta is calmodulin.

It catalyses the reaction 2 ATP + phosphorylase b = 2 ADP + phosphorylase a.. Catalytic subunit of the phosphorylase b kinase (PHK), which mediates the neural and hormonal regulation of glycogen breakdown (glycogenolysis) by phosphorylating and thereby activating glycogen phosphorylase. May regulate glycogeneolysis in the testis. In vitro, phosphorylates PYGM. The protein is Phosphorylase b kinase gamma catalytic chain, liver/testis isoform (PHKG2) of Bos taurus (Bovine).